The chain runs to 565 residues: FAD-linked oxidoreductase ZEB1 (565 aa).

The first 27 residues, 1–27 (MKLSPSKYLPVLLGTLSLTIANPSADC), serve as a signal peptide directing secretion. Residues asparagine 46, asparagine 82, and asparagine 100 are each glycosylated (N-linked (GlcNAc...) asparagine). In terms of domain architecture, FAD-binding PCMH-type spans 115-293 (LGNYVSYAIA…ISMTVKAHPG (179 aa)). Asparagine 340, asparagine 352, and asparagine 421 each carry an N-linked (GlcNAc...) asparagine glycan.

It belongs to the oxygen-dependent FAD-linked oxidoreductase family.

It participates in mycotoxin biosynthesis. Functionally, FAD-linked oxidoreductase; part of the gene cluster that mediates the biosynthesis of zearalenone (ZEA), a nonsteroid estrogen that is a contaminant of cereal grains and causes estrogenic disorders in humans and animals. The ZEA backbone is synthesized from a single acetyl-CoA molecule and eight malonyl-CoA molecules. The reducing polyketide synthase ZEA2 is proposed to synthesize a reduced hexaketide intermediate by using different combinations of its reductive domains during each round of condensation. The hexaketide thioester is then transacylated to the non-reducing polyketide synthase ZEA1 and is further condensed with three malonyl-CoAs without reductive tailoring to yield a mixed reduced/unreduced nonaketide. ZEA1 must be able to interact with ZEA2 to facilitate starter-unit acyltransfer and initiate polyketide biosynthesis. ZEA1 also mediates the required C2-C7 cyclization to form the resorcylate core and catalyzes the formation of the macrolactone. ZEB1 is then responsible for the chemical conversion of beta-zearalenonol (beta-ZOL) to ZEA in the biosynthetic pathway. This Gibberella zeae (strain ATCC MYA-4620 / CBS 123657 / FGSC 9075 / NRRL 31084 / PH-1) (Wheat head blight fungus) protein is FAD-linked oxidoreductase ZEB1.